The primary structure comprises 262 residues: Global transcriptional regulator CodY (262 aa).

Residues Met1–Leu159 are GAF domain. The segment at residues Ala207–Arg226 is a DNA-binding region (H-T-H motif).

It belongs to the CodY family.

Its subcellular location is the cytoplasm. In terms of biological role, DNA-binding global transcriptional regulator which is involved in the adaptive response to starvation and acts by directly or indirectly controlling the expression of numerous genes in response to nutrient availability. During rapid exponential growth, CodY is highly active and represses genes whose products allow adaptation to nutrient depletion. The polypeptide is Global transcriptional regulator CodY (Streptococcus pneumoniae (strain JJA)).